The primary structure comprises 64 residues: Conotoxin Pu3.5 (64 aa).

An N-terminal signal peptide occupies residues 1–16; that stretch reads LGVLLTICLLLFPLTA. Residues 17 to 49 constitute a propeptide that is removed on maturation; it reads VPLDGDQPADQPAGRMQDDISSEQHPFFDPVKR. Intrachain disulfides connect Cys50–Cys63, Cys51–Cys58, and Cys54–Cys62.

This sequence belongs to the conotoxin M superfamily. Expressed by the venom duct.

It localises to the secreted. The chain is Conotoxin Pu3.5 from Conus pulicarius (Flea-bitten cone).